A 271-amino-acid polypeptide reads, in one-letter code: Acetyl-coenzyme A carboxylase carboxyl transferase subunit beta (271 aa).

A CoA carboxyltransferase N-terminal domain is found at 21-271; the sequence is LWIQCPYCKQ…LGDLLALHTA (251 aa). Positions 25, 28, 43, and 46 each coordinate Zn(2+). The C4-type zinc finger occupies 25–46; it reads CPYCKQGSYRESLGNAQVCPHC.

The protein belongs to the AccD/PCCB family. As to quaternary structure, acetyl-CoA carboxylase is a heterohexamer composed of biotin carboxyl carrier protein (AccB), biotin carboxylase (AccC) and two subunits each of ACCase subunit alpha (AccA) and ACCase subunit beta (AccD). Zn(2+) serves as cofactor.

Its subcellular location is the cytoplasm. The catalysed reaction is N(6)-carboxybiotinyl-L-lysyl-[protein] + acetyl-CoA = N(6)-biotinyl-L-lysyl-[protein] + malonyl-CoA. It functions in the pathway lipid metabolism; malonyl-CoA biosynthesis; malonyl-CoA from acetyl-CoA: step 1/1. In terms of biological role, component of the acetyl coenzyme A carboxylase (ACC) complex. Biotin carboxylase (BC) catalyzes the carboxylation of biotin on its carrier protein (BCCP) and then the CO(2) group is transferred by the transcarboxylase to acetyl-CoA to form malonyl-CoA. This Lacticaseibacillus casei (strain BL23) (Lactobacillus casei) protein is Acetyl-coenzyme A carboxylase carboxyl transferase subunit beta.